Reading from the N-terminus, the 272-residue chain is Bifunctional protein FolD 2 (272 aa).

Residues 157-159, Thr-182, and Ile-223 contribute to the NADP(+) site; that span reads GRS.

Belongs to the tetrahydrofolate dehydrogenase/cyclohydrolase family. In terms of assembly, homodimer.

It catalyses the reaction (6R)-5,10-methylene-5,6,7,8-tetrahydrofolate + NADP(+) = (6R)-5,10-methenyltetrahydrofolate + NADPH. The enzyme catalyses (6R)-5,10-methenyltetrahydrofolate + H2O = (6R)-10-formyltetrahydrofolate + H(+). It functions in the pathway one-carbon metabolism; tetrahydrofolate interconversion. Functionally, catalyzes the oxidation of 5,10-methylenetetrahydrofolate to 5,10-methenyltetrahydrofolate and then the hydrolysis of 5,10-methenyltetrahydrofolate to 10-formyltetrahydrofolate. This Syntrophomonas wolfei subsp. wolfei (strain DSM 2245B / Goettingen) protein is Bifunctional protein FolD 2.